Consider the following 179-residue polypeptide: Large ribosomal subunit protein uL5 (179 aa).

This sequence belongs to the universal ribosomal protein uL5 family. In terms of assembly, part of the 50S ribosomal subunit; part of the 5S rRNA/L5/L18/L25 subcomplex. Contacts the 5S rRNA and the P site tRNA. Forms a bridge to the 30S subunit in the 70S ribosome.

This is one of the proteins that bind and probably mediate the attachment of the 5S RNA into the large ribosomal subunit, where it forms part of the central protuberance. In the 70S ribosome it contacts protein S13 of the 30S subunit (bridge B1b), connecting the 2 subunits; this bridge is implicated in subunit movement. Contacts the P site tRNA; the 5S rRNA and some of its associated proteins might help stabilize positioning of ribosome-bound tRNAs. This chain is Large ribosomal subunit protein uL5, found in Vibrio vulnificus (strain CMCP6).